Here is a 568-residue protein sequence, read N- to C-terminus: Urease subunit alpha (568 aa).

One can recognise a Urease domain in the interval 133–568 (GGLDIHIHFN…ELPLAQRYLL (436 aa)). Ni(2+) is bound by residues His-138, His-140, and Lys-217. The residue at position 217 (Lys-217) is an N6-carboxylysine. Residue His-219 participates in substrate binding. His-246 and His-272 together coordinate Ni(2+). His-320 acts as the Proton donor in catalysis. Asp-360 lines the Ni(2+) pocket.

This sequence belongs to the metallo-dependent hydrolases superfamily. Urease alpha subunit family. Heterotrimer of UreA (gamma), UreB (beta) and UreC (alpha) subunits. Three heterotrimers associate to form the active enzyme. Ni cation serves as cofactor. In terms of processing, carboxylation allows a single lysine to coordinate two nickel ions.

The protein resides in the cytoplasm. The enzyme catalyses urea + 2 H2O + H(+) = hydrogencarbonate + 2 NH4(+). It participates in nitrogen metabolism; urea degradation; CO(2) and NH(3) from urea (urease route): step 1/1. This chain is Urease subunit alpha, found in Haloarcula marismortui (strain ATCC 43049 / DSM 3752 / JCM 8966 / VKM B-1809) (Halobacterium marismortui).